Consider the following 383-residue polypeptide: Chorismate synthase (383 aa).

R39 and R45 together coordinate NADP(+). Residues 128 to 130, G291, 306 to 310, and R332 contribute to the FMN site; these read RAS and KPIAT.

This sequence belongs to the chorismate synthase family. In terms of assembly, homotetramer. Requires FMNH2 as cofactor.

It carries out the reaction 5-O-(1-carboxyvinyl)-3-phosphoshikimate = chorismate + phosphate. Its pathway is metabolic intermediate biosynthesis; chorismate biosynthesis; chorismate from D-erythrose 4-phosphate and phosphoenolpyruvate: step 7/7. Its function is as follows. Catalyzes the anti-1,4-elimination of the C-3 phosphate and the C-6 proR hydrogen from 5-enolpyruvylshikimate-3-phosphate (EPSP) to yield chorismate, which is the branch point compound that serves as the starting substrate for the three terminal pathways of aromatic amino acid biosynthesis. This reaction introduces a second double bond into the aromatic ring system. This is Chorismate synthase from Thermus thermophilus (strain ATCC BAA-163 / DSM 7039 / HB27).